The primary structure comprises 477 residues: Tripartite motif-containing protein 72 (477 aa).

The Zn(2+) site is built by Cys-14, Cys-17, Cys-29, His-31, Cys-34, Cys-37, Cys-53, Cys-56, Cys-86, His-89, Cys-97, Asp-100, Cys-105, Cys-108, His-114, and His-117. The RING-type zinc-finger motif lies at 14–57 (CPLCLQLFDAPVTAECGHSFCRACLSRVAGEPAADGTVNCPCCQ). The segment at 81–122 (VPQGHCEEHLDPLSIYCEQDRVLVCGVCASLGSHRGHRLLPA) adopts a B box-type zinc-finger fold. Residues 135 to 232 (QQKLQLQEAS…EKVLEEVADK (98 aa)) adopt a coiled-coil conformation. Residue Ser-255 is modified to Phosphoserine. Residues 271-475 (DFKFQVWRKM…PLLLVGPDGQ (205 aa)) form the B30.2/SPRY domain.

It belongs to the TRIM/RBCC family. In terms of assembly, homodimer. Homooligomer; disulfide-linked. Oligomerizes on the phospholipid membrane. Interacts with DYSF and CAV3. Post-translationally, disulfide bond formation at Cys-242 occurs in case of membrane damage that cause the entry of the oxidized milieu of the extracellular space, resulting in homooligomerization. Muscle-specific.

Its subcellular location is the cell membrane. It localises to the sarcolemma. The protein localises to the cytoplasmic vesicle membrane. The enzyme catalyses S-ubiquitinyl-[E2 ubiquitin-conjugating enzyme]-L-cysteine + [acceptor protein]-L-lysine = [E2 ubiquitin-conjugating enzyme]-L-cysteine + N(6)-ubiquitinyl-[acceptor protein]-L-lysine.. It participates in protein modification; protein ubiquitination. Specifically binds phosphatidylserine. The binding to phospholipids enhances ubiquitination activity. In terms of biological role, muscle-specific E3 ubiquitin-protein ligase that plays a central role in cell membrane repair by nucleating the assembly of the repair machinery at injury sites. Its ubiquitination activity is mediated by E2 ubiquitin-conjugating enzymes UBE2D1, UBE2D2 and UBE2D3. Acts as a sensor of oxidation: upon membrane damage, entry of extracellular oxidative environment results in disulfide bond formation and homooligomerization at the injury site. This oligomerization acts as a nucleation site for recruitment of TRIM72-containing vesicles to the injury site, leading to membrane patch formation. Probably acts upstream of the Ca(2+)-dependent membrane resealing process. Required for transport of DYSF to sites of cell injury during repair patch formation. Regulates membrane budding and exocytosis. May be involved in the regulation of the mobility of KCNB1-containing endocytic vesicles. In Oryctolagus cuniculus (Rabbit), this protein is Tripartite motif-containing protein 72.